The chain runs to 349 residues: MNIKTALSRIVDHLDLSTDEMRDVMREIMTGQCTDAQIGAFMMAMRMKSESIDEIVGAVSVMRELADKVELKTLDRVVDVVGTGGDGANIFNVSTASSFVVAAAGCTVAKHGNRAVSGKSGSADLLEAAGIYLNLTPVQVARCIDNVGIGFMFAQTHHKAMKYAAGPRRDLGLRTLFNMLGPLTNPAGVKHQVVGVFTPALCRPLAEVLQRLGSKHVLVVHSKDGLDEFSLAAPTFVAELKDDQITEYWVEPEDLGMKSQSLHGLSVEGPEASLALIRDALGKRKTENGQKAAEMIVLNAGAALYAADLATSLKEGVALAHDALHTGLAREKLEELGAFTAVFKVENEG.

5-phospho-alpha-D-ribose 1-diphosphate contacts are provided by residues Gly-82, 85–86, 92–95, 110–118, and Ser-122; these read GD, NVST, and KHGNRAVSG. Gly-82 provides a ligand contact to anthranilate. Ser-94 serves as a coordination point for Mg(2+). Residue Asn-113 participates in anthranilate binding. Arg-168 lines the anthranilate pocket. Mg(2+) contacts are provided by Asp-227 and Glu-228.

Belongs to the anthranilate phosphoribosyltransferase family. In terms of assembly, homodimer. It depends on Mg(2+) as a cofactor.

It carries out the reaction N-(5-phospho-beta-D-ribosyl)anthranilate + diphosphate = 5-phospho-alpha-D-ribose 1-diphosphate + anthranilate. It functions in the pathway amino-acid biosynthesis; L-tryptophan biosynthesis; L-tryptophan from chorismate: step 2/5. Catalyzes the transfer of the phosphoribosyl group of 5-phosphorylribose-1-pyrophosphate (PRPP) to anthranilate to yield N-(5'-phosphoribosyl)-anthranilate (PRA). This is Anthranilate phosphoribosyltransferase from Pseudomonas fluorescens (strain Pf0-1).